Here is a 1426-residue protein sequence, read N- to C-terminus: MGKTKIYSVGFTVHEAQTLVTEKGQPVDPLVVVRCCGREYRTEIKYAKSNVVSWDESHTWTDLCLTDEEWETAYITFEVQAANAFWRNTLLGLVSVQLRLIQLRKTHQIRKALPLQHPDDTDVHGSLRVTVFACAPGEAPPSPGEEEVLEEEDHNDYDDLRKAVIDTNQVVEREAGSRLYHVYVTAYRVEDLPRSSKGARDPFVTCEFAGCKLKSTQARGCCSHTFNECFRFPVVTPLPEDAILIKIWDWNFMKADELIAVGRISFSELRTRQMVPRWFNLYGFDDEEVAQATKVAGQGGRLVANCYLGRILLGARAERLTKEDDLMPAHTVAARPYETPPVIPLAVLADVYEVQGAPGEKVSVEIWCGPARARTKWVTGLETKAAQRAGVAPQAFNRAMEGALGVASYLRGDIPEGEDRFPFDNTEGRVEDLRLVVPEDTKQQWDIIISLYVRGTTKGFMGDTRIAFQRLKMSKIPGHVHNNPRAPIWVPLISTPPFESVKPAPAILMVIEKSKVEAFARSKRKHVTAVGYQLRAYVYAARNLLSPSGALPNPFVQVACAGTSRETEVFEQTSSPVFMDCLLLDITMMTDPVSRLPTVAPIVVTLFEQRSWGIQFLGRATCHYDRLRGRLKPGESPTVAEPRWIKLRGGKYANRHLGDVLLLLELIRKRDAEIIPAFPMRPVVNMCNLTFSCLGVRSLYMTQRAKRLDYVSIRKGQDKKTELRRIRGPLLRISVSSYASAGRGNNEAILRYERNLPEDPTTVNKLWTTVTKAANADIFKVVNMEIDVPVDPIYDPRLVVQVYDRKQKPKYFIGEYSMSLVPLIPWVLDQQSAIEAVSPVNDFTDTVDLKHLGGLLRGFHGNSKNRGTGQIGLEALSAADRETADAHKEKTLAQSRFATYDPDNKTFSDSWLLPSGLPKILVSSYAVPGFRCDVIYTNMFTLNVYIPAKFVLFAEGKRAADKKTKEQYARPSVDSTLEQFLDDVIFPSDSLKKSVMGDIDVTGFVKFFVNLTHHEEPNPHVDSSAAEWASSEDRMRRHLRGEDAYPKLLKIRVYVIRAISLYVGDDRILPNPYLLFNLGDKSDTLRAEAKPNTHNPEFFTVWEKDVMFPDDSQFELQVWSAHEGTSGGLDDIFIGSTCIDLEERWFSKEWQKSMSKNQVPMEYRPLKQMPSGSFKGTVEMWVELMDFQKAGEVPKFDLQSPAATEVEIRVIVWGARNLNFKALGKDFVDAMIRCNLDCTGYRGSQPIAQQTDVHYYSKTGAAIFNWRMVYSRVVMPVSTCVLQIAAYDNRNMGESPFIGEVNLELRRYLERVASTLNSIDVDAELKLINRSRESADVSSFGFVQVSLQFISQSEATSKPVGLGREPPNRDPRLTTPQEGRKWEDVLGSAGLRVDYRPLWYWVRVAAVVFLSIWIFVVAFLYPSLLG.

C2 domains are found at residues 1–111 (MGKT…QIRK), 161–279 (RKAV…PRWF), 512–638 (EKSK…ESPT), 1031–1154 (SEDR…QKSM), and 1189–1318 (KAGE…TLNS). Positions 1357–1377 (SKPVGLGREPPNRDPRLTTPQ) are disordered. Residues 1366 to 1377 (PPNRDPRLTTPQ) are compositionally biased toward basic and acidic residues. Residues 1404–1424 (VAAVVFLSIWIFVVAFLYPSL) traverse the membrane as a helical segment.

This sequence belongs to the ferlin family.

It localises to the membrane. It is found in the inner membrane complex. The protein localises to the cytoplasmic vesicle. The protein resides in the secretory vesicle. Its subcellular location is the rhoptry. Its function is as follows. Regulates rhoptry secretion. Required for completing the lytic cycle. Required for host cell invasion. Not required for microneme secretion and conoid extrusion. This is Ferlin 2 from Toxoplasma gondii.